A 995-amino-acid polypeptide reads, in one-letter code: Bifunctional glutamine synthetase adenylyltransferase/adenylyl-removing enzyme (995 aa).

Residues 1 to 474 (MNHSAPGNAD…HYEKLFEGDD (474 aa)) form an adenylyl removase region. 2 glnE regions span residues 122-333 (RRMK…MKRQ) and 637-853 (SYEE…MRRA). Positions 479–995 (AKLPALDYSA…LEGTSPASAR (517 aa)) are adenylyl transferase.

It belongs to the GlnE family. It depends on Mg(2+) as a cofactor.

It catalyses the reaction [glutamine synthetase]-O(4)-(5'-adenylyl)-L-tyrosine + phosphate = [glutamine synthetase]-L-tyrosine + ADP. The enzyme catalyses [glutamine synthetase]-L-tyrosine + ATP = [glutamine synthetase]-O(4)-(5'-adenylyl)-L-tyrosine + diphosphate. Its function is as follows. Involved in the regulation of glutamine synthetase GlnA, a key enzyme in the process to assimilate ammonia. When cellular nitrogen levels are high, the C-terminal adenylyl transferase (AT) inactivates GlnA by covalent transfer of an adenylyl group from ATP to specific tyrosine residue of GlnA, thus reducing its activity. Conversely, when nitrogen levels are low, the N-terminal adenylyl removase (AR) activates GlnA by removing the adenylyl group by phosphorolysis, increasing its activity. The regulatory region of GlnE binds the signal transduction protein PII (GlnB) which indicates the nitrogen status of the cell. This chain is Bifunctional glutamine synthetase adenylyltransferase/adenylyl-removing enzyme, found in Bradyrhizobium diazoefficiens (strain JCM 10833 / BCRC 13528 / IAM 13628 / NBRC 14792 / USDA 110).